The following is a 203-amino-acid chain: dITP/XTP pyrophosphatase (203 aa).

Residue 9–14 (SSNAGK) participates in substrate binding. Mg(2+) contacts are provided by E42 and D72. D72 functions as the Proton acceptor in the catalytic mechanism. Residues S73, 161–164 (FGYD), K184, and 189–190 (HR) contribute to the substrate site.

It belongs to the HAM1 NTPase family. In terms of assembly, homodimer. Requires Mg(2+) as cofactor.

It carries out the reaction XTP + H2O = XMP + diphosphate + H(+). The enzyme catalyses dITP + H2O = dIMP + diphosphate + H(+). It catalyses the reaction ITP + H2O = IMP + diphosphate + H(+). In terms of biological role, pyrophosphatase that catalyzes the hydrolysis of nucleoside triphosphates to their monophosphate derivatives, with a high preference for the non-canonical purine nucleotides XTP (xanthosine triphosphate), dITP (deoxyinosine triphosphate) and ITP. Seems to function as a house-cleaning enzyme that removes non-canonical purine nucleotides from the nucleotide pool, thus preventing their incorporation into DNA/RNA and avoiding chromosomal lesions. In Acidobacterium capsulatum (strain ATCC 51196 / DSM 11244 / BCRC 80197 / JCM 7670 / NBRC 15755 / NCIMB 13165 / 161), this protein is dITP/XTP pyrophosphatase.